Reading from the N-terminus, the 389-residue chain is Spore coat polysaccharide biosynthesis protein SpsC (389 aa).

At Lys-187 the chain carries N6-(pyridoxal phosphate)lysine.

Belongs to the DegT/DnrJ/EryC1 family. The cofactor is pyridoxal 5'-phosphate.

It functions in the pathway spore coat biogenesis; spore coat polysaccharide biosynthesis. The protein is Spore coat polysaccharide biosynthesis protein SpsC (spsC) of Bacillus subtilis (strain 168).